Consider the following 192-residue polypeptide: Fe/S biogenesis protein NfuA (192 aa).

2 residues coordinate [4Fe-4S] cluster: cysteine 150 and cysteine 153.

This sequence belongs to the NfuA family. Homodimer. [4Fe-4S] cluster is required as a cofactor.

In terms of biological role, involved in iron-sulfur cluster biogenesis. Binds a 4Fe-4S cluster, can transfer this cluster to apoproteins, and thereby intervenes in the maturation of Fe/S proteins. Could also act as a scaffold/chaperone for damaged Fe/S proteins. The chain is Fe/S biogenesis protein NfuA from Vesicomyosocius okutanii subsp. Calyptogena okutanii (strain HA).